The primary structure comprises 242 residues: MIELKNVNKYYGTHHVLKNINLSVKEGEKLVIIGPSGSGKSTTIRCMNGLEEVSSGEVVVNNLVLNHKNKIEICRKYCAMVFQHFNLYPHMTVLQNLTLAPMKLQKKSKKEAEETAFKYLKVVGLLDKANVYPATLSGGQQQRVAIARSLCTKKPYILFDEPTSALDPETIQEVLDVMKEISHQSNTTMVVVTHEMGFAKEVADRIIFMEDGAIVEENIPSEFFSNPKTERARLFLGKILKN.

An ABC transporter domain is found at 2 to 236; it reads IELKNVNKYY…PKTERARLFL (235 aa). 34 to 41 contributes to the ATP binding site; sequence GPSGSGKS.

This sequence belongs to the ABC transporter superfamily.

It localises to the cell inner membrane. Its function is as follows. Most probably involved, with PEB1, in a binding-protein-dependent transport system for an amino acid. Probably responsible for energy coupling to the transport system. This chain is Probable ABC transporter ATP-binding protein PEB1C (peb1C), found in Campylobacter jejuni subsp. jejuni serotype O:2 (strain ATCC 700819 / NCTC 11168).